The following is a 421-amino-acid chain: Testin (421 aa).

One can recognise a PET domain in the interval Met92 to Asn199. Disordered stretches follow at residues Glu133 to Cys164 and Lys193 to Arg213. Basic and acidic residues predominate over residues Pro155–Cys164. LIM zinc-binding domains lie at Tyr234 to Glu297, Pro299 to Val359, and Gln362 to Ser421.

The protein belongs to the prickle / espinas / testin family. In terms of assembly, interacts via LIM domain 1 with ZYX. Interacts (via LIM domain 3) with ENAH and VASP. Interacts with ALKBH4, talin, actin, alpha-actinin, GRIP1 and PXN. Interacts (via LIM domain 2) with ACTL7A (via N-terminus). Heterodimer with ACTL7A; the heterodimer interacts with ENAH to form a heterotrimer.

It localises to the cytoplasm. The protein localises to the cell junction. Its subcellular location is the focal adhesion. In terms of biological role, scaffold protein that may play a role in cell adhesion, cell spreading and in the reorganization of the actin cytoskeleton. Plays a role in the regulation of cell proliferation. May act as a tumor suppressor. This is Testin (TES) from Ovis aries (Sheep).